A 790-amino-acid chain; its full sequence is Penicillin-binding protein 1A (790 aa).

Over 1-6 the chain is Cytoplasmic; that stretch reads MYKSLF. A helical; Signal-anchor for type II membrane protein membrane pass occupies residues 7–27; it reads FCLKIFAVLILVGCGITAYII. The Periplasmic segment spans residues 28–790; that stretch reads YHYSRDLPDY…SKEDQSQEIY (763 aa). Residues 49–220 are transglycosylase; it reads TRIYSHDGKL…SELNPERNYA (172 aa). Glu-87 acts as the Proton donor; for transglycosylase activity in catalysis. The interval 398-711 is transpeptidase; sequence DVIVVEPIKD…SNVVLPIFID (314 aa). The active-site Acyl-ester intermediate; for transpeptidase activity is the Ser-457.

This sequence in the N-terminal section; belongs to the glycosyltransferase 51 family. In the C-terminal section; belongs to the transpeptidase family.

Its subcellular location is the cell inner membrane. It catalyses the reaction [GlcNAc-(1-&gt;4)-Mur2Ac(oyl-L-Ala-gamma-D-Glu-L-Lys-D-Ala-D-Ala)](n)-di-trans,octa-cis-undecaprenyl diphosphate + beta-D-GlcNAc-(1-&gt;4)-Mur2Ac(oyl-L-Ala-gamma-D-Glu-L-Lys-D-Ala-D-Ala)-di-trans,octa-cis-undecaprenyl diphosphate = [GlcNAc-(1-&gt;4)-Mur2Ac(oyl-L-Ala-gamma-D-Glu-L-Lys-D-Ala-D-Ala)](n+1)-di-trans,octa-cis-undecaprenyl diphosphate + di-trans,octa-cis-undecaprenyl diphosphate + H(+). The enzyme catalyses Preferential cleavage: (Ac)2-L-Lys-D-Ala-|-D-Ala. Also transpeptidation of peptidyl-alanyl moieties that are N-acyl substituents of D-alanine.. It functions in the pathway cell wall biogenesis; peptidoglycan biosynthesis. Functionally, cell wall formation. Synthesis of cross-linked peptidoglycan from the lipid intermediates. The enzyme has a penicillin-insensitive transglycosylase N-terminal domain (formation of linear glycan strands) and a penicillin-sensitive transpeptidase C-terminal domain (cross-linking of the peptide subunits). The chain is Penicillin-binding protein 1A (mrcA) from Rickettsia felis (strain ATCC VR-1525 / URRWXCal2) (Rickettsia azadi).